An 839-amino-acid polypeptide reads, in one-letter code: Homeobox-leucine zipper protein HOX10 (839 aa).

Disordered stretches follow at residues 1–24 (MAAA…SGMD) and 132–157 (QNTP…RDAS). Residues 24–87 (DSGKYVRYTP…NRRCRDKQRK (64 aa)) constitute a DNA-binding region (homeobox). A coiled-coil region spans residues 91 to 134 (RLQAVNRKLTAMNKLLMEENERLQKQVSQLVHENAHMRQQLQNT). Positions 155-383 (DASNPSGLLS…IAQETSGEVV (229 aa)) constitute an START domain.

The protein belongs to the HD-ZIP homeobox family. Class III subfamily. Expressed in stems, leaf sheaths and blades and panicles.

The protein resides in the nucleus. Its function is as follows. Probable transcription factor. This is Homeobox-leucine zipper protein HOX10 (HOX10) from Oryza sativa subsp. japonica (Rice).